Reading from the N-terminus, the 486-residue chain is Ribosomal RNA small subunit methyltransferase F (486 aa).

S-adenosyl-L-methionine-binding positions include 122 to 128 (ASAPGSK), glutamate 146, aspartate 173, and aspartate 191. Cysteine 244 serves as the catalytic Nucleophile.

It belongs to the class I-like SAM-binding methyltransferase superfamily. RsmB/NOP family.

It is found in the cytoplasm. The enzyme catalyses cytidine(1407) in 16S rRNA + S-adenosyl-L-methionine = 5-methylcytidine(1407) in 16S rRNA + S-adenosyl-L-homocysteine + H(+). Functionally, specifically methylates the cytosine at position 1407 (m5C1407) of 16S rRNA. This is Ribosomal RNA small subunit methyltransferase F from Shewanella loihica (strain ATCC BAA-1088 / PV-4).